A 191-amino-acid chain; its full sequence is Ion-translocating oxidoreductase complex subunit B (191 aa).

The hydrophobic stretch occupies residues 1 to 26 (MSLVLVAVLALLGLCLIAGAILGFAA). A 4Fe-4S domain is found at 32 to 90 (EGDPIAEQINALLPQTQCGQCGYPGCKPYAEAIAGGDKINKCPPGGEATIQALADLLDV). Positions 49, 52, 57, 73, 114, 117, 120, 124, 144, 147, 150, and 154 each coordinate [4Fe-4S] cluster. 4Fe-4S ferredoxin-type domains are found at residues 105-134 (MVAFIREAECIGCTKCIQACPVDAIVGAAR) and 135-164 (QMHTVIVSECTGCDLCVEPCPVDCIDMIEV).

Belongs to the 4Fe4S bacterial-type ferredoxin family. RnfB subfamily. The complex is composed of six subunits: RnfA, RnfB, RnfC, RnfD, RnfE and RnfG. It depends on [4Fe-4S] cluster as a cofactor.

It is found in the cell inner membrane. In terms of biological role, part of a membrane-bound complex that couples electron transfer with translocation of ions across the membrane. In Ectopseudomonas mendocina (strain ymp) (Pseudomonas mendocina), this protein is Ion-translocating oxidoreductase complex subunit B.